A 390-amino-acid chain; its full sequence is Calcium-binding and spermatid-specific protein 1 (390 aa).

3 disordered regions span residues 1–23 (MAED…TPTE), 82–109 (ASLK…KESI), and 146–225 (TIDA…TIPD). The span at 162–174 (ETQEDSSANDEDT) shows a compositional bias: acidic residues. Low complexity predominate over residues 184 to 193 (TDVSSSTSSD). Residues Ser-251 and Ser-267 each carry the phosphoserine modification. Thr-280 is modified (phosphothreonine; by CK2). Ser-312 is subject to Phosphoserine. The segment covering 330-344 (EPHVDTKNSPEKDAA) has biased composition (basic and acidic residues). Residues 330 to 390 (EPHVDTKNSP…LKEEPDELMM (61 aa)) are disordered. Ser-346, Ser-356, Ser-371, and Ser-375 each carry phosphoserine. The span at 346–364 (SVTNVTEEFPSVTSVVEQS) shows a compositional bias: polar residues.

Expressed in seminiferous tubules of the testis in step 10 spermatids (stage X), subsequently increasing to reach maximal levels of step 18 elongated spermatids (stage VI) (at protein level). Strongly expressed in testis. Weakly expressed in olfactory epithelium. Expressed in spermatids of seminiferous tubules at steps 4-14 (stages IV to XIV of the seminiferous epithelium classification).

The protein resides in the cytoplasm. It localises to the mitochondrion inner membrane. It is found in the cell projection. Its subcellular location is the cilium. The protein localises to the flagellum. The protein resides in the cytoplasmic vesicle. It localises to the secretory vesicle. It is found in the acrosome. Its function is as follows. Calcium-binding protein. Essential for maintaining the structural integrity of the sperm flagella. In Rattus norvegicus (Rat), this protein is Calcium-binding and spermatid-specific protein 1 (Cabs1).